Reading from the N-terminus, the 359-residue chain is N-acetyl-gamma-glutamyl-phosphate reductase (359 aa).

Cys-162 is a catalytic residue.

It belongs to the NAGSA dehydrogenase family. Type 1 subfamily.

The protein localises to the cytoplasm. It carries out the reaction N-acetyl-L-glutamate 5-semialdehyde + phosphate + NADP(+) = N-acetyl-L-glutamyl 5-phosphate + NADPH + H(+). It participates in amino-acid biosynthesis; L-arginine biosynthesis; N(2)-acetyl-L-ornithine from L-glutamate: step 3/4. Catalyzes the NADPH-dependent reduction of N-acetyl-5-glutamyl phosphate to yield N-acetyl-L-glutamate 5-semialdehyde. The polypeptide is N-acetyl-gamma-glutamyl-phosphate reductase (Prochlorococcus marinus (strain MIT 9211)).